The following is a 147-amino-acid chain: Small ribosomal subunit protein bS6 (147 aa).

The disordered stretch occupies residues 107–147 (KEGRERKARPARAERRDDTEAEDLSDEEGVEAEDFEEEQGV). Positions 125 to 147 (TEAEDLSDEEGVEAEDFEEEQGV) are enriched in acidic residues.

The protein belongs to the bacterial ribosomal protein bS6 family.

In terms of biological role, binds together with bS18 to 16S ribosomal RNA. The polypeptide is Small ribosomal subunit protein bS6 (Cellvibrio japonicus (strain Ueda107) (Pseudomonas fluorescens subsp. cellulosa)).